The chain runs to 194 residues: ATP-dependent Clp protease proteolytic subunit (194 aa).

S97 (nucleophile) is an active-site residue. Residue H122 is part of the active site.

The protein belongs to the peptidase S14 family. In terms of assembly, fourteen ClpP subunits assemble into 2 heptameric rings which stack back to back to give a disk-like structure with a central cavity, resembling the structure of eukaryotic proteasomes.

It localises to the cytoplasm. It catalyses the reaction Hydrolysis of proteins to small peptides in the presence of ATP and magnesium. alpha-casein is the usual test substrate. In the absence of ATP, only oligopeptides shorter than five residues are hydrolyzed (such as succinyl-Leu-Tyr-|-NHMec, and Leu-Tyr-Leu-|-Tyr-Trp, in which cleavage of the -Tyr-|-Leu- and -Tyr-|-Trp bonds also occurs).. In terms of biological role, cleaves peptides in various proteins in a process that requires ATP hydrolysis. Has a chymotrypsin-like activity. Plays a major role in the degradation of misfolded proteins. The protein is ATP-dependent Clp protease proteolytic subunit of Campylobacter jejuni subsp. jejuni serotype O:23/36 (strain 81-176).